We begin with the raw amino-acid sequence, 174 residues long: Probasin (174 aa).

Residues methionine 1–serine 18 form the signal peptide. Residues cysteine 77 and cysteine 168 are joined by a disulfide bond.

It belongs to the calycin superfamily. Lipocalin family.

It is found in the secreted. This chain is Probasin (Pbsn), found in Mus musculus (Mouse).